The primary structure comprises 626 residues: Elongation factor 4 (626 aa).

One can recognise a tr-type G domain in the interval 14-195; the sequence is SVIRNFCIIA…QIVMDVPAPH (182 aa). GTP contacts are provided by residues 26–31 and 142–145; these read DHGKST and NKID. The segment at 603-626 is disordered; it reads LSTGEDSNDRDTKDKIRAAQKTEG. Over residues 609–626 the composition is skewed to basic and acidic residues; that stretch reads SNDRDTKDKIRAAQKTEG.

It belongs to the TRAFAC class translation factor GTPase superfamily. Classic translation factor GTPase family. LepA subfamily.

It localises to the cell membrane. The catalysed reaction is GTP + H2O = GDP + phosphate + H(+). Functionally, required for accurate and efficient protein synthesis under certain stress conditions. May act as a fidelity factor of the translation reaction, by catalyzing a one-codon backward translocation of tRNAs on improperly translocated ribosomes. Back-translocation proceeds from a post-translocation (POST) complex to a pre-translocation (PRE) complex, thus giving elongation factor G a second chance to translocate the tRNAs correctly. Binds to ribosomes in a GTP-dependent manner. The polypeptide is Elongation factor 4 (Bifidobacterium longum (strain DJO10A)).